A 149-amino-acid chain; its full sequence is Transcriptional repressor NrdR (149 aa).

The segment at 3-34 (CPFCATDDTKVVDSRLTADGYQIRRRRECPVC) is a zinc-finger region. The 91-residue stretch at 49–139 (PHIVKNNGSR…VYLSFDDVEE (91 aa)) folds into the ATP-cone domain.

Belongs to the NrdR family. Zn(2+) is required as a cofactor.

In terms of biological role, negatively regulates transcription of bacterial ribonucleotide reductase nrd genes and operons by binding to NrdR-boxes. This is Transcriptional repressor NrdR from Glaesserella parasuis serovar 5 (strain SH0165) (Haemophilus parasuis).